The sequence spans 150 residues: Large ribosomal subunit protein uL13 (150 aa).

It belongs to the universal ribosomal protein uL13 family. As to quaternary structure, part of the 50S ribosomal subunit.

This protein is one of the early assembly proteins of the 50S ribosomal subunit, although it is not seen to bind rRNA by itself. It is important during the early stages of 50S assembly. The protein is Large ribosomal subunit protein uL13 of Persephonella marina (strain DSM 14350 / EX-H1).